The sequence spans 225 residues: MTQNLERLQRQIGYQFNQPALLKQALTHRSAAVKHNERLEFLGDAILNFIIAEALYHQFPKCNEGELSRMRATLVREPTLASLARQFELGDYLSLGPGELKSGGFRRESILADCVEAIIGAISLDSDLATTTKIVQHWYQAQLKQIQPGDNQKDPKTRLQEYLQGKRLPLPTYNVVEIKGEAHCQTFTVECYVKNIDRTFMGSGASRRKAEQAAAEKILQLLEMK.

The RNase III domain occupies 5–127 (LERLQRQIGY…IIGAISLDSD (123 aa)). A Mg(2+)-binding site is contributed by glutamate 40. The active site involves aspartate 44. Residues aspartate 113 and glutamate 116 each coordinate Mg(2+). Residue glutamate 116 is part of the active site. The DRBM domain occupies 154–224 (DPKTRLQEYL…AEKILQLLEM (71 aa)).

Belongs to the ribonuclease III family. As to quaternary structure, homodimer. Requires Mg(2+) as cofactor.

The protein resides in the cytoplasm. It catalyses the reaction Endonucleolytic cleavage to 5'-phosphomonoester.. In terms of biological role, digests double-stranded RNA. Involved in the processing of primary rRNA transcript to yield the immediate precursors to the large and small rRNAs (23S and 16S). Also processes some mRNAs, and tRNAs when they are encoded in the rRNA operon. Its function is as follows. CRISPR (clustered regularly interspaced short palindromic repeat) is an adaptive immune system that provides protection against mobile genetic elements (viruses, transposable elements and conjugative plasmids). CRISPR clusters contain spacers, sequences complementary to antecedent mobile elements, and target invading nucleic acids. CRISPR clusters are transcribed and processed into CRISPR RNA (crRNA). In this organism endogenous ribonuclease 3 and Cas9 are required for correct coprocessing of pre-crRNA and the trans-encoded small RNA (tracrRNA). Cas9, crRNA and tracrRNA are required for cleavage of invading DNA. Complements pre-crRNA and tracrRNA coprocessing defects in an rnc deletion in S.pyogenes strain 370. This Pasteurella multocida (strain Pm70) protein is Ribonuclease 3.